We begin with the raw amino-acid sequence, 124 residues long: Small ribosomal subunit protein uS10 (124 aa).

It belongs to the universal ribosomal protein uS10 family.

This chain is Small ribosomal subunit protein uS10 (rps20), found in Dictyostelium discoideum (Social amoeba).